The following is a 266-amino-acid chain: UPF0294 protein YafD (266 aa).

The protein belongs to the UPF0294 family.

It is found in the cytoplasm. The chain is UPF0294 protein YafD from Salmonella paratyphi C (strain RKS4594).